Here is a 437-residue protein sequence, read N- to C-terminus: Glutamate-1-semialdehyde 2,1-aminomutase (437 aa).

N6-(pyridoxal phosphate)lysine is present on lysine 277.

The protein belongs to the class-III pyridoxal-phosphate-dependent aminotransferase family. HemL subfamily. Homodimer. Pyridoxal 5'-phosphate serves as cofactor.

It is found in the cytoplasm. The enzyme catalyses (S)-4-amino-5-oxopentanoate = 5-aminolevulinate. It functions in the pathway porphyrin-containing compound metabolism; protoporphyrin-IX biosynthesis; 5-aminolevulinate from L-glutamyl-tRNA(Glu): step 2/2. The protein operates within porphyrin-containing compound metabolism; chlorophyll biosynthesis. This Thermosynechococcus vestitus (strain NIES-2133 / IAM M-273 / BP-1) protein is Glutamate-1-semialdehyde 2,1-aminomutase.